We begin with the raw amino-acid sequence, 649 residues long: DNA mismatch repair protein MutL (649 aa).

Positions 339–414 (KKKTKDESVQ…VREEESWQST (76 aa)) are disordered. The span at 342–360 (TKDESVQEQFHFEHTKPKE) shows a compositional bias: basic and acidic residues. Positions 388–402 (PQLWQQPKQEWQPPQ) are enriched in low complexity.

Belongs to the DNA mismatch repair MutL/HexB family.

This protein is involved in the repair of mismatches in DNA. It is required for dam-dependent methyl-directed DNA mismatch repair. May act as a 'molecular matchmaker', a protein that promotes the formation of a stable complex between two or more DNA-binding proteins in an ATP-dependent manner without itself being part of a final effector complex. The chain is DNA mismatch repair protein MutL from Bacillus cytotoxicus (strain DSM 22905 / CIP 110041 / 391-98 / NVH 391-98).